The following is a 718-amino-acid chain: Mitochondrial potassium channel ATP-binding subunit (718 aa).

The N-terminal 25 residues, 1–25 (MLVHLFRVGIRGGPFPGRLLPPLRF), are a transit peptide targeting the mitochondrion. 3 helical membrane passes run 128-148 (LLVLGVAVVLALGAALVNVQI), 179-199 (THLLILYGVQGLLTFGYLVLL), and 279-299 (LLLMLATPALMGVGTLMGSGL). One can recognise an ABC transmembrane type-1 domain in the interval 133–420 (VAVVLALGAA…LSVLFGQVVR (288 aa)). Residues 455–692 (VTFQNVCFSY…GGLYAELIRR (238 aa)) form the ABC transporter domain. An ATP-binding site is contributed by 490-497 (GQSGGGKT). The tract at residues 697–718 (APRTAAPLPKKPEGPRNHQHKS) is disordered.

It belongs to the ABC transporter superfamily. ABCB family. Multidrug resistance exporter (TC 3.A.1.201) subfamily. In terms of assembly, the mitochondrial potassium channel (mitoK(ATP)) is composed of 4 subunits of CCDC51/MITOK and 4 subunits of ABCB8/MITOSUR. Physically interacts with PAAT. Interacts with Neuropilin-1 (NRP1) in mitochondria.

Its subcellular location is the mitochondrion inner membrane. Channel activity inhibited by ATP via ABCB8/MITOSUR subunit. In terms of biological role, ATP-binding subunit of the mitochondrial ATP-gated potassium channel (mitoK(ATP)). Together with pore-forming subunit CCDC51/MITOK of the mitoK(ATP) channel, mediates ATP-dependent potassium currents across the mitochondrial inner membrane. An increase in ATP intracellular levels closes the channel, inhibiting K(+) transport, whereas a decrease in ATP levels enhances K(+) uptake in the mitochondrial matrix. Plays a role in mitochondrial iron transport. Required for maintenance of normal cardiac function, possibly by influencing mitochondrial iron export and regulating the maturation of cytosolic iron sulfur cluster-containing enzymes. The protein is Mitochondrial potassium channel ATP-binding subunit (ABCB8) of Pongo abelii (Sumatran orangutan).